Consider the following 558-residue polypeptide: CTP synthase (558 aa).

The amidoligase domain stretch occupies residues 1-267 (MAKFVFVTGG…CLEMLDVLNL (267 aa)). Ser13 provides a ligand contact to CTP. Ser13 is a binding site for UTP. Residues 14 to 19 (SIGKGI) and Asp71 contribute to the ATP site. 2 residues coordinate Mg(2+): Asp71 and Glu141. CTP-binding positions include 148-150 (DIE), 188-193 (KTKPTQ), and Lys224. Residues 188–193 (KTKPTQ) and Lys224 each bind UTP. The 243-residue stretch at 292–534 (KVALVGKYVQ…IEAAQLRLPA (243 aa)) folds into the Glutamine amidotransferase type-1 domain. Gly354 contacts L-glutamine. The active-site Nucleophile; for glutamine hydrolysis is Cys381. L-glutamine is bound by residues 382–385 (LGMQ), Glu405, and Arg462. Active-site residues include His507 and Glu509. Residues 536-558 (PDEALRRQSQTNISAQEKPSRIG) form a disordered region. Positions 542-552 (RQSQTNISAQE) are enriched in polar residues.

This sequence belongs to the CTP synthase family. Homotetramer.

It carries out the reaction UTP + L-glutamine + ATP + H2O = CTP + L-glutamate + ADP + phosphate + 2 H(+). The enzyme catalyses L-glutamine + H2O = L-glutamate + NH4(+). It catalyses the reaction UTP + NH4(+) + ATP = CTP + ADP + phosphate + 2 H(+). It functions in the pathway pyrimidine metabolism; CTP biosynthesis via de novo pathway; CTP from UDP: step 2/2. Its activity is regulated as follows. Allosterically activated by GTP, when glutamine is the substrate; GTP has no effect on the reaction when ammonia is the substrate. The allosteric effector GTP functions by stabilizing the protein conformation that binds the tetrahedral intermediate(s) formed during glutamine hydrolysis. Inhibited by the product CTP, via allosteric rather than competitive inhibition. Functionally, catalyzes the ATP-dependent amination of UTP to CTP with either L-glutamine or ammonia as the source of nitrogen. Regulates intracellular CTP levels through interactions with the four ribonucleotide triphosphates. The polypeptide is CTP synthase (Prochlorococcus marinus (strain MIT 9303)).